The sequence spans 201 residues: dTTP/UTP pyrophosphatase (201 aa).

D80 (proton acceptor) is an active-site residue.

It belongs to the Maf family. YhdE subfamily. The cofactor is a divalent metal cation.

It is found in the cytoplasm. It carries out the reaction dTTP + H2O = dTMP + diphosphate + H(+). The catalysed reaction is UTP + H2O = UMP + diphosphate + H(+). In terms of biological role, nucleoside triphosphate pyrophosphatase that hydrolyzes dTTP and UTP. May have a dual role in cell division arrest and in preventing the incorporation of modified nucleotides into cellular nucleic acids. This is dTTP/UTP pyrophosphatase from Novosphingobium aromaticivorans (strain ATCC 700278 / DSM 12444 / CCUG 56034 / CIP 105152 / NBRC 16084 / F199).